We begin with the raw amino-acid sequence, 289 residues long: 4-diphosphocytidyl-2-C-methyl-D-erythritol kinase (289 aa).

Lysine 10 is a catalytic residue. Proline 95 to alanine 105 is a binding site for ATP. Aspartate 137 is an active-site residue.

Belongs to the GHMP kinase family. IspE subfamily.

It carries out the reaction 4-CDP-2-C-methyl-D-erythritol + ATP = 4-CDP-2-C-methyl-D-erythritol 2-phosphate + ADP + H(+). The protein operates within isoprenoid biosynthesis; isopentenyl diphosphate biosynthesis via DXP pathway; isopentenyl diphosphate from 1-deoxy-D-xylulose 5-phosphate: step 3/6. In terms of biological role, catalyzes the phosphorylation of the position 2 hydroxy group of 4-diphosphocytidyl-2C-methyl-D-erythritol. This chain is 4-diphosphocytidyl-2-C-methyl-D-erythritol kinase, found in Ligilactobacillus salivarius (strain UCC118) (Lactobacillus salivarius).